A 1047-amino-acid chain; its full sequence is MIEWIIRRSVANRFLVLMGALFLSIWGTWTIINTPVDALPDLSDVQVIIKTSYPGQAPQIVENQVTYPLTTTMLSVPGAKTVRGFSQFGDSYVYVIFEDGTDPYWARSRVLEYLNQVQGKLPAGVSAELGPDATGVGWIYEYALVDRSGKHDLADLRSLQDWFLKYELKTIPDVAEVASVGGVVKEYQVVIDPQRLAQYGISLAEVKSALDASNQEAGGSSIELAEAEYMVRASGYLQTLDDFNHIVLKASENGVPVYLRDVAKVQIGPEMRRGIAELNGEGEVAGGVVILRSGKNAREVIAAVKDKLETLKSSLPEGVEIVTTYDRSQLIDRAIDNLSGKLLEEFIVVAVVCALFLWHVRSALVAIISLPLGLCIAFIVMHFQGLNANIMSLGGIAIAVGAMVDAAIVMIENAHKRLEEWQHQHPDATLDNKTRWQVITDASVEVGPALFISLLIITLSFIPIFTLEGQEGRLFGPLAFTKTYAMAGAALLAIVVIPILMGYWIRGKIPPESSNPLNRFLIRVYHPLLLKVLHWPKTTLLVAALSVLTVLWPLNKVGGEFLPQINEGDLLYMPSTLPGISAAEAASMLQKTDKLIMSVPEVARVFGKTGKAETATDSAPLEMVETTIQLKPQEQWRPGMTMDKIIEELDNTVRLPGLANLWVPPIRNRIDMLSTGIKSPIGIKVSGTVLADIDAMAEQIEEVARTVPGVASALAERLEGGRYINVEINREKAARYGMTVADVQLFVTSAVGGAMVGETVEGIARYPINLRYPQSWRDSPQALRQLPILTPMKQQITLADVADIKVSTGPSMLKTENARPTSWIYIDARDRDMVSVVHDLQKAIAEKVQLKPGTSVAFSGQFELLERANHKLKLMVPMTLMIIFVLLYLAFRRVGEALLIISSVPFALVGGIWLLWWMGFHLSVATGTGFIALAGVAAEFGVVMLMYLRHAIEAVPSLNNPQTFSEQKLDEALYHGAVLRVRPKAMTVAVIIAGLLPILWGTGAGSEVMSRIAAPMIGGMITAPLLSLFIIPAAYKLMWLHRHRVRK.

The next 12 membrane-spanning stretches (helical) occupy residues 14–34 (FLVLMGALFLSIWGTWTIINT), 338–358 (LSGKLLEEFIVVAVVCALFLW), 363–383 (ALVAIISLPLGLCIAFIVMHF), 391–411 (MSLGGIAIAVGAMVDAAIVMI), 446–466 (VGPALFISLLIITLSFIPIFT), 485–505 (AMAGAALLAIVVIPILMGYWI), 532–552 (VLHWPKTTLLVAALSVLTVLW), 871–891 (KLKLMVPMTLMIIFVLLYLAF), 898–918 (LLIISSVPFALVGGIWLLWWM), 928–948 (TGFIALAGVAAEFGVVMLMYL), 985–1005 (AMTVAVIIAGLLPILWGTGAG), and 1012–1032 (IAAPMIGGMITAPLLSLFIIP).

This sequence belongs to the resistance-nodulation-cell division (RND) (TC 2.A.6) family. The cus efflux system is composed of CusA, CusB, CusC and CusF.

The protein localises to the cell inner membrane. In terms of biological role, part of a cation efflux system that mediates resistance to copper and silver. This Escherichia coli (strain K12) protein is Cation efflux system protein CusA (cusA).